The following is a 308-amino-acid chain: 3'(2'),5'-bisphosphate nucleotidase 1 (308 aa).

N-acetylalanine is present on Ala-2. The active-site Proton acceptor is Asp-51. Mg(2+) contacts are provided by Glu-74, Asp-117, Leu-119, and Asp-120. Thr-122 serves as the catalytic Proton acceptor. At Thr-122 the chain carries Phosphothreonine. AMP-binding residues include Thr-195, His-198, Gly-220, and Lys-224. Ser-240 carries the post-translational modification Phosphoserine. Position 244 is an N6-succinyllysine (Lys-244). Mg(2+) is bound at residue Asp-247.

The protein belongs to the inositol monophosphatase superfamily. Mg(2+) serves as cofactor. As to expression, highly expressed in kidney, liver, pancreas and heart. Detected at lower levels in brain, placenta, lung and skeletal muscle.

The enzyme catalyses adenosine 3',5'-bisphosphate + H2O = AMP + phosphate. It catalyses the reaction adenosine 2',5'-bisphosphate + H2O = AMP + phosphate. It carries out the reaction 3'-phosphoadenylyl sulfate + H2O = adenosine 5'-phosphosulfate + phosphate. The catalysed reaction is 1D-myo-inositol 1,4-bisphosphate + H2O = 1D-myo-inositol 4-phosphate + phosphate. The enzyme catalyses 1D-myo-inositol 1,3,4-trisphosphate + H2O = 1D-myo-inositol 3,4-bisphosphate + phosphate. Is very sensitive to inhibition by Li(+) (IC(50)=0.3 mM for hydrolysis of PAP; IC(50)=0.6 mM for hydrolysis of inositol-1,4-bis-phosphate). Is not affected by high Na(+) concentrations. Phosphatase that converts 3'(2')-phosphoadenosine 5'-phosphate (PAP) to AMP and inositol 1,4-bisphosphate (Ins(1,4)P2) to inositol 4-phosphate. Is also able to hydrolyze adenosine 3'-phosphate 5'-phosphosulfate (PAPS) to adenosine 5'-phosphosulfate (APS). Probably prevents the toxic accumulation of PAP, a compound which inhibits a variety of proteins, including PAPS-utilizing enzymes such as sulfotransferases, and RNA processing enzymes. Could also play a role in inositol recycling and phosphoinositide metabolism. Is not active on 3'-AMP, inositol-1-phosphate and inositol-1,4,5-triphosphate. This chain is 3'(2'),5'-bisphosphate nucleotidase 1 (BPNT1), found in Homo sapiens (Human).